Reading from the N-terminus, the 303-residue chain is Golgi to ER traffic protein 2 (303 aa).

The Cytoplasmic segment spans residues 1-168 (MSEQPLSQDE…NAYNIYQQRL (168 aa)). The interval 19 to 86 (RQAKMARGKA…DPEDDPDLMD (68 aa)) is disordered. The segment covering 31 to 48 (RLNNILSQGSSVKGTTDP) has biased composition (polar residues). A helical transmembrane segment spans residues 169 to 189 (WKFRFSIIRFAAVLTNFFYHY). The Lumenal segment spans residues 190 to 216 (LTIQDYSFTSSPHFYVRALAPHPAVNS). The chain crosses the membrane as a helical span at residues 217–236 (FITWFSTCEVAILASFYLIT). At 237 to 280 (SKNNIYANASDGNLLLKGISMGAMVLPQLRAYQPLVIRLAHYWE) the chain is on the cytoplasmic side. The helical transmembrane segment at 281 to 301 (VFSMLLGDIFLVVVLFGLVSI) threads the bilayer. The Lumenal portion of the chain corresponds to 302–303 (YN).

The protein belongs to the GET2 family. Component of the Golgi to ER traffic (GET) complex, which is composed of GET1, GET2 and GET3. Within the complex, GET1 and GET2 form a heterotetramer which is stabilized by phosphatidylinositol binding and which binds to the GET3 homodimer.

It is found in the endoplasmic reticulum membrane. The protein localises to the golgi apparatus membrane. Functionally, required for the post-translational delivery of tail-anchored (TA) proteins to the endoplasmic reticulum. Together with GET1, acts as a membrane receptor for soluble GET3, which recognizes and selectively binds the transmembrane domain of TA proteins in the cytosol. The GET complex cooperates with the HDEL receptor ERD2 to mediate the ATP-dependent retrieval of resident ER proteins that contain a C-terminal H-D-E-L retention signal from the Golgi to the ER. The protein is Golgi to ER traffic protein 2 of Debaryomyces hansenii (strain ATCC 36239 / CBS 767 / BCRC 21394 / JCM 1990 / NBRC 0083 / IGC 2968) (Yeast).